Here is a 457-residue protein sequence, read N- to C-terminus: Siroheme synthase (457 aa).

Residues 1 to 204 (MDHLPIFCQL…ADEKAVNATT (204 aa)) form a precorrin-2 dehydrogenase /sirohydrochlorin ferrochelatase region. Residues 22–23 (DV) and 43–44 (LT) contribute to the NAD(+) site. S128 is modified (phosphoserine). The segment at 216 to 457 (GEVVLVGAGP…RDKLNWFSNY (242 aa)) is uroporphyrinogen-III C-methyltransferase. P225 is an S-adenosyl-L-methionine binding site. D248 functions as the Proton acceptor in the catalytic mechanism. Catalysis depends on K270, which acts as the Proton donor. Residues 301–303 (GGD), I306, 331–332 (TA), M382, and G411 contribute to the S-adenosyl-L-methionine site.

This sequence in the N-terminal section; belongs to the precorrin-2 dehydrogenase / sirohydrochlorin ferrochelatase family. It in the C-terminal section; belongs to the precorrin methyltransferase family.

The catalysed reaction is uroporphyrinogen III + 2 S-adenosyl-L-methionine = precorrin-2 + 2 S-adenosyl-L-homocysteine + H(+). It catalyses the reaction precorrin-2 + NAD(+) = sirohydrochlorin + NADH + 2 H(+). The enzyme catalyses siroheme + 2 H(+) = sirohydrochlorin + Fe(2+). It functions in the pathway cofactor biosynthesis; adenosylcobalamin biosynthesis; precorrin-2 from uroporphyrinogen III: step 1/1. Its pathway is cofactor biosynthesis; adenosylcobalamin biosynthesis; sirohydrochlorin from precorrin-2: step 1/1. The protein operates within porphyrin-containing compound metabolism; siroheme biosynthesis; precorrin-2 from uroporphyrinogen III: step 1/1. It participates in porphyrin-containing compound metabolism; siroheme biosynthesis; siroheme from sirohydrochlorin: step 1/1. It functions in the pathway porphyrin-containing compound metabolism; siroheme biosynthesis; sirohydrochlorin from precorrin-2: step 1/1. Functionally, multifunctional enzyme that catalyzes the SAM-dependent methylations of uroporphyrinogen III at position C-2 and C-7 to form precorrin-2 via precorrin-1. Then it catalyzes the NAD-dependent ring dehydrogenation of precorrin-2 to yield sirohydrochlorin. Finally, it catalyzes the ferrochelation of sirohydrochlorin to yield siroheme. This is Siroheme synthase from Salmonella heidelberg (strain SL476).